The primary structure comprises 212 residues: MSQDFVIEAFPRDDQGKGASRRLRREERKIPAIIYGGGKDATPVAIWHNELKKAIENEAFFSHILTVDIQGKKESVILKDLQRHPYKPILTHADFLRVDKDHEIHVNVPLHFINEDTAPAVKLQGGIVSHTMTEVEVICLPQNLPEFIEVDLNEVEMDQVVHLSDLKLPKGVKVAALQQGEDHDLPVASIHKPKGAKADDAEGEEGEEGGEE.

Residues 183–212 (HDLPVASIHKPKGAKADDAEGEEGEEGGEE) form a disordered region. The span at 201 to 212 (AEGEEGEEGGEE) shows a compositional bias: acidic residues.

It belongs to the bacterial ribosomal protein bL25 family. CTC subfamily. In terms of assembly, part of the 50S ribosomal subunit; part of the 5S rRNA/L5/L18/L25 subcomplex. Contacts the 5S rRNA. Binds to the 5S rRNA independently of L5 and L18.

Functionally, this is one of the proteins that binds to the 5S RNA in the ribosome where it forms part of the central protuberance. The polypeptide is Large ribosomal subunit protein bL25 (Marinobacter nauticus (strain ATCC 700491 / DSM 11845 / VT8) (Marinobacter aquaeolei)).